Here is a 269-residue protein sequence, read N- to C-terminus: Triosephosphate isomerase (269 aa).

Residue 8 to 10 (NWK) coordinates substrate. Histidine 105 functions as the Electrophile in the catalytic mechanism. The Proton acceptor role is filled by glutamate 183. Substrate is bound by residues glycine 189, serine 227, and 248-249 (GG).

Belongs to the triosephosphate isomerase family. Homodimer.

It localises to the cytoplasm. It catalyses the reaction D-glyceraldehyde 3-phosphate = dihydroxyacetone phosphate. It participates in carbohydrate biosynthesis; gluconeogenesis. It functions in the pathway carbohydrate degradation; glycolysis; D-glyceraldehyde 3-phosphate from glycerone phosphate: step 1/1. Its function is as follows. Involved in the gluconeogenesis. Catalyzes stereospecifically the conversion of dihydroxyacetone phosphate (DHAP) to D-glyceraldehyde-3-phosphate (G3P). This is Triosephosphate isomerase from Psychrobacter cryohalolentis (strain ATCC BAA-1226 / DSM 17306 / VKM B-2378 / K5).